Consider the following 331-residue polypeptide: Ornithine lipid hydroxylase OlsE (331 aa).

The next 5 membrane-spanning stretches (helical) occupy residues 13 to 33 (VSSL…YFAF), 37 to 57 (MHLL…ALFE), 85 to 105 (GGVQ…ATVA), 120 to 140 (WPMA…LYMA), and 189 to 209 (LLGA…FIGL). The 135-residue stretch at 126–260 (VVLGLVIAEF…LVIWDQLLGT (135 aa)) folds into the Fatty acid hydroxylase domain.

This sequence belongs to the sterol desaturase family.

Its subcellular location is the cell inner membrane. It participates in lipid metabolism. In terms of biological role, involved in the biosynthesis of ornithine lipids (OLs), which are phosphorus-free membrane lipids. Is responsible for the hydroxylation of OL within the ornithine moiety. In Rhizobium tropici, this protein is Ornithine lipid hydroxylase OlsE.